We begin with the raw amino-acid sequence, 643 residues long: Phosphomethylpyrimidine synthase (643 aa).

Residues N248, M277, Y306, H342, 362–364 (SRG), 403–406 (DGLR), and E442 each bind substrate. H446 is a binding site for Zn(2+). A substrate-binding site is contributed by Y469. H510 is a binding site for Zn(2+). The [4Fe-4S] cluster site is built by C590, C593, and C598.

It belongs to the ThiC family. In terms of assembly, homodimer. It depends on [4Fe-4S] cluster as a cofactor.

The catalysed reaction is 5-amino-1-(5-phospho-beta-D-ribosyl)imidazole + S-adenosyl-L-methionine = 4-amino-2-methyl-5-(phosphooxymethyl)pyrimidine + CO + 5'-deoxyadenosine + formate + L-methionine + 3 H(+). Its pathway is cofactor biosynthesis; thiamine diphosphate biosynthesis. Catalyzes the synthesis of the hydroxymethylpyrimidine phosphate (HMP-P) moiety of thiamine from aminoimidazole ribotide (AIR) in a radical S-adenosyl-L-methionine (SAM)-dependent reaction. The polypeptide is Phosphomethylpyrimidine synthase (Paraburkholderia phymatum (strain DSM 17167 / CIP 108236 / LMG 21445 / STM815) (Burkholderia phymatum)).